The following is a 396-amino-acid chain: Cathepsin E (396 aa).

Positions 1–19 are cleaved as a signal peptide; it reads MKTLLLLLLVLLELGEAQG. A propeptide spans 20–53 (activation peptide); that stretch reads SLHRVPLRRHPSLKKKLRARSQLSEFWKSHNLDM. One can recognise a Peptidase A1 domain in the interval 78–396; that stretch reads YFGTISIGSP…NRVGLAPAVP (319 aa). N-linked (GlcNAc...) asparagine glycosylation is present at Asn90. Asp96 is a catalytic residue. Intrachain disulfides connect Cys109/Cys114 and Cys272/Cys276. The active site involves Asp281. A disulfide bridge connects residues Cys314 and Cys351.

Belongs to the peptidase A1 family. Homodimer; disulfide-linked. In terms of processing, glycosylated. The nature of the carbohydrate chain varies between cell types. In fibroblasts, the proenzyme contains a high mannose-type oligosaccharide, while the mature enzyme contains a complex-type oligosaccharide. In erythrocyte membranes, both the proenzyme and mature enzyme contain a complex-type oligosaccharide. Post-translationally, two forms are produced by autocatalytic cleavage, form I begins at Ile-54, form II begins at Thr-57. As to expression, expressed abundantly in the stomach, the Clara cells of the lung and activated B-lymphocytes, and at lower levels in lymph nodes, skin and spleen. Not expressed in resting B-lymphocytes.

The protein localises to the endosome. The catalysed reaction is Similar to cathepsin D, but slightly broader specificity.. May have a role in immune function. Probably involved in the processing of antigenic peptides during MHC class II-mediated antigen presentation. May play a role in activation-induced lymphocyte depletion in the thymus, and in neuronal degeneration and glial cell activation in the brain. The polypeptide is Cathepsin E (CTSE) (Homo sapiens (Human)).